We begin with the raw amino-acid sequence, 203 residues long: Outer-membrane lipoprotein carrier protein (203 aa).

Residues 1–21 form the signal peptide; it reads MKKMAIACALLSSVVASSVWA. Residues 178–203 are disordered; the sequence is QQNGAVEPSKFTFTPPQGVTIDDQRK.

The protein belongs to the LolA family. As to quaternary structure, monomer.

Its subcellular location is the periplasm. Its function is as follows. Participates in the translocation of lipoproteins from the inner membrane to the outer membrane. Only forms a complex with a lipoprotein if the residue after the N-terminal Cys is not an aspartate (The Asp acts as a targeting signal to indicate that the lipoprotein should stay in the inner membrane). The protein is Outer-membrane lipoprotein carrier protein of Salmonella typhi.